The following is a 129-amino-acid chain: Protein NrdI (129 aa).

This sequence belongs to the NrdI family.

Functionally, probably involved in ribonucleotide reductase function. The protein is Protein NrdI of Macrococcus caseolyticus (strain JCSC5402) (Macrococcoides caseolyticum).